The following is a 156-amino-acid chain: ATP synthase subunit b (156 aa).

Residues 7–27 (IFFQMLVFFVLGWFTMKFVWP) traverse the membrane as a helical segment.

The protein belongs to the ATPase B chain family. In terms of assembly, F-type ATPases have 2 components, F(1) - the catalytic core - and F(0) - the membrane proton channel. F(1) has five subunits: alpha(3), beta(3), gamma(1), delta(1), epsilon(1). F(0) has three main subunits: a(1), b(2) and c(10-14). The alpha and beta chains form an alternating ring which encloses part of the gamma chain. F(1) is attached to F(0) by a central stalk formed by the gamma and epsilon chains, while a peripheral stalk is formed by the delta and b chains.

Its subcellular location is the cell inner membrane. Functionally, f(1)F(0) ATP synthase produces ATP from ADP in the presence of a proton or sodium gradient. F-type ATPases consist of two structural domains, F(1) containing the extramembraneous catalytic core and F(0) containing the membrane proton channel, linked together by a central stalk and a peripheral stalk. During catalysis, ATP synthesis in the catalytic domain of F(1) is coupled via a rotary mechanism of the central stalk subunits to proton translocation. In terms of biological role, component of the F(0) channel, it forms part of the peripheral stalk, linking F(1) to F(0). In Bordetella bronchiseptica (strain ATCC BAA-588 / NCTC 13252 / RB50) (Alcaligenes bronchisepticus), this protein is ATP synthase subunit b.